The sequence spans 355 residues: UDP-N-acetylglucosamine--N-acetylmuramyl-(pentapeptide) pyrophosphoryl-undecaprenol N-acetylglucosamine transferase (355 aa).

Residues 13-15 (TGG), asparagine 125, arginine 162, serine 190, isoleucine 244, and glutamine 289 contribute to the UDP-N-acetyl-alpha-D-glucosamine site.

The protein belongs to the glycosyltransferase 28 family. MurG subfamily.

The protein resides in the cell inner membrane. The enzyme catalyses di-trans,octa-cis-undecaprenyl diphospho-N-acetyl-alpha-D-muramoyl-L-alanyl-D-glutamyl-meso-2,6-diaminopimeloyl-D-alanyl-D-alanine + UDP-N-acetyl-alpha-D-glucosamine = di-trans,octa-cis-undecaprenyl diphospho-[N-acetyl-alpha-D-glucosaminyl-(1-&gt;4)]-N-acetyl-alpha-D-muramoyl-L-alanyl-D-glutamyl-meso-2,6-diaminopimeloyl-D-alanyl-D-alanine + UDP + H(+). It functions in the pathway cell wall biogenesis; peptidoglycan biosynthesis. In terms of biological role, cell wall formation. Catalyzes the transfer of a GlcNAc subunit on undecaprenyl-pyrophosphoryl-MurNAc-pentapeptide (lipid intermediate I) to form undecaprenyl-pyrophosphoryl-MurNAc-(pentapeptide)GlcNAc (lipid intermediate II). This chain is UDP-N-acetylglucosamine--N-acetylmuramyl-(pentapeptide) pyrophosphoryl-undecaprenol N-acetylglucosamine transferase, found in Neisseria gonorrhoeae (strain ATCC 700825 / FA 1090).